A 293-amino-acid chain; its full sequence is Nucleotide-binding protein DvMF_0424 (293 aa).

13–20 (GLSGAGKS) serves as a coordination point for ATP. GTP is bound at residue 65 to 68 (DLRE).

Belongs to the RapZ-like family.

In terms of biological role, displays ATPase and GTPase activities. The chain is Nucleotide-binding protein DvMF_0424 from Nitratidesulfovibrio vulgaris (strain DSM 19637 / Miyazaki F) (Desulfovibrio vulgaris).